The primary structure comprises 318 residues: Protoheme IX farnesyltransferase (318 aa).

9 consecutive transmembrane segments (helical) span residues 29-49, 51-71, 102-122, 123-143, 151-171, 179-199, 219-239, 241-261, and 280-300; these read IIPLLLITTAGSMWIAAQGQV, PVLLLVTMAGGTLAAASAQTI, LIFAIALAVLSFTLLTVFANL, LAASLALSGIIFYVLIYTHWL, IVIGGAAGAIPALVGWAAVTG, LIFAIVFLWTPPHFWALALMI, ATVKQIWYYTLITVAATLLLV, PLHASGIVYAAIAISLGAVFI, and LFLYSISYMMLLCLGMVVDSL.

It belongs to the UbiA prenyltransferase family. Protoheme IX farnesyltransferase subfamily.

It localises to the cell inner membrane. The catalysed reaction is heme b + (2E,6E)-farnesyl diphosphate + H2O = Fe(II)-heme o + diphosphate. Its pathway is porphyrin-containing compound metabolism; heme O biosynthesis; heme O from protoheme: step 1/1. In terms of biological role, converts heme B (protoheme IX) to heme O by substitution of the vinyl group on carbon 2 of heme B porphyrin ring with a hydroxyethyl farnesyl side group. This is Protoheme IX farnesyltransferase from Nostoc sp. (strain PCC 7120 / SAG 25.82 / UTEX 2576).